The primary structure comprises 190 residues: Lipid A acyltransferase PagP (190 aa).

The first 24 residues, 1-24, serve as a signal peptide directing secretion; it reads MNRYLLTTLSAPLLALFFSFSLQA. Catalysis depends on residues histidine 62, aspartate 105, and serine 106.

Belongs to the lipid A palmitoyltransferase family. As to quaternary structure, homodimer.

The protein resides in the cell outer membrane. It carries out the reaction a lipid A + a 1,2-diacyl-sn-glycero-3-phosphocholine = a hepta-acyl lipid A + a 2-acyl-sn-glycero-3-phosphocholine. It catalyses the reaction a lipid IVA + a 1,2-diacyl-sn-glycero-3-phosphocholine = a lipid IVB + a 2-acyl-sn-glycero-3-phosphocholine. The catalysed reaction is a lipid IIA + a 1,2-diacyl-sn-glycero-3-phosphocholine = a lipid IIB + a 2-acyl-sn-glycero-3-phosphocholine. Functionally, transfers a fatty acid residue from the sn-1 position of a phospholipid to the N-linked hydroxyfatty acid chain on the proximal unit of lipid A or its precursors. The polypeptide is Lipid A acyltransferase PagP (Pantoea ananatis (strain LMG 20103)).